A 199-amino-acid polypeptide reads, in one-letter code: Small ribosomal subunit protein uS4 (199 aa).

The S4 RNA-binding domain occupies 91-154 (SRLDNLVYRM…RGLQLIKDAL (64 aa)).

It belongs to the universal ribosomal protein uS4 family. In terms of assembly, part of the 30S ribosomal subunit. Contacts protein S5. The interaction surface between S4 and S5 is involved in control of translational fidelity.

Functionally, one of the primary rRNA binding proteins, it binds directly to 16S rRNA where it nucleates assembly of the body of the 30S subunit. In terms of biological role, with S5 and S12 plays an important role in translational accuracy. The polypeptide is Small ribosomal subunit protein uS4 (Brevibacillus brevis (strain 47 / JCM 6285 / NBRC 100599)).